The chain runs to 235 residues: Alpha-S2-casein (235 aa).

The signal sequence occupies residues 1–15 (MKFFIFTCLLAVAFA). Serine 23, serine 24, serine 25, serine 28, serine 47, serine 72, serine 73, serine 74, serine 77, serine 147, serine 149, and serine 168 each carry phosphoserine. Polar residues predominate over residues 144 to 158 (EELSTSEEPVSSSQE). The disordered stretch occupies residues 144–163 (EELSTSEEPVSSSQEENTKT).

The protein belongs to the alpha-casein family. In terms of tissue distribution, mammary gland specific. Secreted in milk.

The protein localises to the secreted. Functionally, important role in the capacity of milk to transport calcium phosphate. This Sus scrofa (Pig) protein is Alpha-S2-casein (CSN1S2).